A 58-amino-acid chain; its full sequence is Large ribosomal subunit protein uL30 (58 aa).

The protein belongs to the universal ribosomal protein uL30 family. In terms of assembly, part of the 50S ribosomal subunit.

This is Large ribosomal subunit protein uL30 from Psychromonas ingrahamii (strain DSM 17664 / CCUG 51855 / 37).